Reading from the N-terminus, the 406-residue chain is Peptidyl-alpha-hydroxyglycine alpha-amidating lyase 2 (406 aa).

Residues 1 to 19 (MSRLLFVALLAISLGYVAS) form the signal peptide. 4 NHL repeats span residues 168–209 (GAIK…FKPF), 218–261 (GKRF…FNAA), 264–308 (LLRT…PKAG), and 358–402 (DPRS…RVWK). Intrachain disulfides connect Cys-231/Cys-251 and Cys-293/Cys-304.

This sequence belongs to the peptidyl-alpha-hydroxyglycine alpha-amidating lyase family. It depends on Zn(2+) as a cofactor. N-glycosylated. In terms of tissue distribution, only found in a subset of neurons distributed throughout all levels of the central nervous system (CNS). Present in at least some neuroendocrine cells. In adult brains, it is only present in a small handful of cells, the majority of which being distributed in distal parts of the medulla, with a higher expression in the posterior surface of the brain (at protein level).

Its subcellular location is the secreted. The catalysed reaction is a [peptide]-C-terminal (2S)-2-hydroxyglycine = a [peptide]-C-terminal amide + glyoxylate. In terms of biological role, peptidyl-alpha-hydroxylglycine alpha-amidating lyase that catalyzes an essential reaction in C-terminal alpha-amidation of peptides. Mediates the dismutation of the unstable peptidyl(2-hydroxyglycine) intermediate to glyoxylate and the corresponding desglycine peptide amide. C-terminal amidation of peptides such as neuropeptides is essential for full biological activity. The sequence is that of Peptidyl-alpha-hydroxyglycine alpha-amidating lyase 2 (Pal2) from Drosophila melanogaster (Fruit fly).